We begin with the raw amino-acid sequence, 346 residues long: Cell division protein FtsZ 2 (346 aa).

GTP-binding positions include 23-27, 110-112, Glu-141, Arg-145, and Asp-189; these read GGGGN and GTG. The disordered stretch occupies residues 320 to 346; sequence SNRSAQPTAPEAMNGQTAAAVPSRTLQ.

This sequence belongs to the FtsZ family. In terms of assembly, homodimer. Polymerizes to form a dynamic ring structure in a strictly GTP-dependent manner. Interacts directly with several other division proteins.

Its subcellular location is the cytoplasm. Functionally, essential cell division protein that forms a contractile ring structure (Z ring) at the future cell division site. The regulation of the ring assembly controls the timing and the location of cell division. One of the functions of the FtsZ ring is to recruit other cell division proteins to the septum to produce a new cell wall between the dividing cells. Binds GTP and shows GTPase activity. This Rhizobium meliloti (strain 1021) (Ensifer meliloti) protein is Cell division protein FtsZ 2.